A 343-amino-acid polypeptide reads, in one-letter code: D-erythrose-4-phosphate dehydrogenase (343 aa).

12-13 (RI) is an NAD(+) binding site. Residues 154–156 (SCT), R200, 213–214 (TK), and R236 contribute to the substrate site. C155 functions as the Nucleophile in the catalytic mechanism. N318 lines the NAD(+) pocket.

The protein belongs to the glyceraldehyde-3-phosphate dehydrogenase family. Epd subfamily. In terms of assembly, homotetramer.

It is found in the cytoplasm. It catalyses the reaction D-erythrose 4-phosphate + NAD(+) + H2O = 4-phospho-D-erythronate + NADH + 2 H(+). Its pathway is cofactor biosynthesis; pyridoxine 5'-phosphate biosynthesis; pyridoxine 5'-phosphate from D-erythrose 4-phosphate: step 1/5. In terms of biological role, catalyzes the NAD-dependent conversion of D-erythrose 4-phosphate to 4-phosphoerythronate. This Pseudoalteromonas translucida (strain TAC 125) protein is D-erythrose-4-phosphate dehydrogenase.